Reading from the N-terminus, the 460-residue chain is Argininosuccinate lyase (460 aa).

Belongs to the lyase 1 family. Argininosuccinate lyase subfamily.

Its subcellular location is the cytoplasm. It catalyses the reaction 2-(N(omega)-L-arginino)succinate = fumarate + L-arginine. It participates in amino-acid biosynthesis; L-arginine biosynthesis; L-arginine from L-ornithine and carbamoyl phosphate: step 3/3. The protein is Argininosuccinate lyase of Lawsonia intracellularis (strain PHE/MN1-00).